The sequence spans 109 residues: Iron-sulfur cluster assembly protein CyaY (109 aa).

This sequence belongs to the frataxin family.

Involved in iron-sulfur (Fe-S) cluster assembly. May act as a regulator of Fe-S biogenesis. The polypeptide is Iron-sulfur cluster assembly protein CyaY (Verminephrobacter eiseniae (strain EF01-2)).